We begin with the raw amino-acid sequence, 118 residues long: MGDKELMWALKNGDLDEVKNILVKAEDVNRTLEGGRKPLHYAADCGQAEMLEFLLSKGADVNAPDKHGITPLLSATYEGHVTCVKILLEKGADKNRKGPDGLSAFEAAESEAIKALLE.

ANK repeat units lie at residues 1 to 30, 34 to 65, and 67 to 98; these read MGDK…DVNR, GGRK…NAPD, and HGIT…NRKG.

It belongs to the myotrophin family.

Its subcellular location is the cytoplasm. The protein localises to the nucleus. The protein resides in the perinuclear region. Functionally, regulates NF-kappa-B transcription factor activity. Promotes growth of cardiomyocytes, but not cardiomyocyte proliferation. Promotes cardiac muscle hypertrophy. Plays a role in the regulation of the growth of actin filaments. Inhibits the activity of the F-actin-capping protein complex. The sequence is that of Myotrophin (mtpn) from Danio rerio (Zebrafish).